A 98-amino-acid polypeptide reads, in one-letter code: NADH-ubiquinone oxidoreductase chain 4L (98 aa).

Transmembrane regions (helical) follow at residues 1-21 (MTPVHFSFSSAFILGLMGLAF), 29-49 (ALLCLEGMMLSLFIALALWAL), and 59-79 (APMLLLAFSACEASTGLALLV).

The protein belongs to the complex I subunit 4L family.

It is found in the mitochondrion membrane. It catalyses the reaction a ubiquinone + NADH + 5 H(+)(in) = a ubiquinol + NAD(+) + 4 H(+)(out). Functionally, core subunit of the mitochondrial membrane respiratory chain NADH dehydrogenase (Complex I) which catalyzes electron transfer from NADH through the respiratory chain, using ubiquinone as an electron acceptor. Part of the enzyme membrane arm which is embedded in the lipid bilayer and involved in proton translocation. In Carassius auratus (Goldfish), this protein is NADH-ubiquinone oxidoreductase chain 4L (MT-ND4L).